A 97-amino-acid chain; its full sequence is MTLREMIDRLLGRQQASATTAKHRLQLVLAHDRSDLNPDLMEQMRREILEVVNRYVELDLEGGDVSLETEERATALVANLPIRRVRDDVLPQVPAVQ.

This sequence belongs to the MinE family.

Prevents the cell division inhibition by proteins MinC and MinD at internal division sites while permitting inhibition at polar sites. This ensures cell division at the proper site by restricting the formation of a division septum at the midpoint of the long axis of the cell. This is Cell division topological specificity factor from Synechococcus sp. (strain RCC307).